We begin with the raw amino-acid sequence, 262 residues long: Phenylalanine-4-hydroxylase (262 aa).

Fe cation contacts are provided by His121, His126, and Glu166.

This sequence belongs to the biopterin-dependent aromatic amino acid hydroxylase family. Monomer. It depends on Fe(2+) as a cofactor.

The catalysed reaction is (6R)-L-erythro-5,6,7,8-tetrahydrobiopterin + L-phenylalanine + O2 = (4aS,6R)-4a-hydroxy-L-erythro-5,6,7,8-tetrahydrobiopterin + L-tyrosine. It functions in the pathway amino-acid degradation; L-phenylalanine degradation; acetoacetate and fumarate from L-phenylalanine: step 1/6. This chain is Phenylalanine-4-hydroxylase (phhA), found in Pseudomonas aeruginosa (strain ATCC 15692 / DSM 22644 / CIP 104116 / JCM 14847 / LMG 12228 / 1C / PRS 101 / PAO1).